The sequence spans 121 residues: Large ribosomal subunit protein bL12 (121 aa).

The protein belongs to the bacterial ribosomal protein bL12 family. As to quaternary structure, homodimer. Part of the ribosomal stalk of the 50S ribosomal subunit. Forms a multimeric L10(L12)X complex, where L10 forms an elongated spine to which 2 to 4 L12 dimers bind in a sequential fashion. Binds GTP-bound translation factors.

In terms of biological role, forms part of the ribosomal stalk which helps the ribosome interact with GTP-bound translation factors. Is thus essential for accurate translation. In Limosilactobacillus fermentum (strain NBRC 3956 / LMG 18251) (Lactobacillus fermentum), this protein is Large ribosomal subunit protein bL12.